Here is a 334-residue protein sequence, read N- to C-terminus: UPF0104 membrane protein MTH_378 (334 aa).

8 helical membrane passes run 7–27 (FYFFALSILLILALIIWMGPS), 33–53 (VYMADWMIIAIALLIHMGVLA), 120–140 (FFDLGIGGGLLLLAAVMVPVI), 142–162 (VIALFGAILSVLITYLIYLVN), 218–238 (VIFILSLLSWLMECLRLYLVF), 247–267 (FSAVIIIFLLANLVGILSALP), 277–297 (MAGLFVVFGVPGFLAGSIALV), and 300–320 (IISFWMVTALGAIFSSCYAGE).

It belongs to the UPF0104 family.

Its subcellular location is the cell membrane. The sequence is that of UPF0104 membrane protein MTH_378 from Methanothermobacter thermautotrophicus (strain ATCC 29096 / DSM 1053 / JCM 10044 / NBRC 100330 / Delta H) (Methanobacterium thermoautotrophicum).